The chain runs to 688 residues: MDFITINSSNKTEEFALKQVAKQATSSLMYRLGKTIILASVCVEREPVSEDFLPLVVQFLEKSYAAGKIPGGFVKREGRAQDFEILTSRLIDRTLRPLFPKDYRYPTQITLMVLSHDIENDLQVSALNAASAALFLAHIAPIKSVSACRIARIDNEFIINPNTSLLNQSSLDLFVSGTKESLNMIEMRSLGQKLNALEEPLMLEALELAQKSLKETCTLYEEVFTPHQNELLFKESQAIVLNERLLDLLTNQYFDEIIKGIESSALSERENVFNEIAKKISEAHSEFSLEEIEWSLEKVKKTEIRRMIIQDKIRPDKRALEEVRPILIESDLLPMAHSSILFTRGQTQSLVVGVLGTDNDAQTHESLEHKTPIKERFMFHYNFPPFCVGEASSIGAASRRELGHGNLAKRALETSIKNKEQVIRLVSEILESNGSSSMASVCAGSLALYASGVEIYDLVAGVAMGMVSEGQDHAILSDISGLEDAEGDMDFKIAGNLEGITAMQMDTKMSGIKLEILYQALLQAKEAREHILKIMHEAKEKIVINFSHLPTTEIFNVAPDKIVEIIGQGGRVIKEIVEKFEVKIDLNKPSGEVKIMGNKERVLKTKEFILNYLHSLDQELEQYAIDEVLEAQVKRIVDFGAFLSLPKGGEGLLRKQNMDRCQVVLKEGDSIKCRVISFNKGKIALDLA.

Residues aspartate 484 and aspartate 490 each coordinate Mg(2+). The KH domain occupies 550 to 609 (PTTEIFNVAPDKIVEIIGQGGRVIKEIVEKFEVKIDLNKPSGEVKIMGNKERVLKTKEFI). The 63-residue stretch at 626 to 688 (DEVLEAQVKR…NKGKIALDLA (63 aa)) folds into the S1 motif domain.

Belongs to the polyribonucleotide nucleotidyltransferase family. Requires Mg(2+) as cofactor.

It is found in the cytoplasm. It carries out the reaction RNA(n+1) + phosphate = RNA(n) + a ribonucleoside 5'-diphosphate. Involved in mRNA degradation. Catalyzes the phosphorolysis of single-stranded polyribonucleotides processively in the 3'- to 5'-direction. The polypeptide is Polyribonucleotide nucleotidyltransferase (Helicobacter pylori (strain P12)).